Reading from the N-terminus, the 341-residue chain is Phosphate acyltransferase (341 aa).

It belongs to the PlsX family. As to quaternary structure, homodimer. Probably interacts with PlsY.

Its subcellular location is the cytoplasm. The enzyme catalyses a fatty acyl-[ACP] + phosphate = an acyl phosphate + holo-[ACP]. It participates in lipid metabolism; phospholipid metabolism. Functionally, catalyzes the reversible formation of acyl-phosphate (acyl-PO(4)) from acyl-[acyl-carrier-protein] (acyl-ACP). This enzyme utilizes acyl-ACP as fatty acyl donor, but not acyl-CoA. In Vibrio parahaemolyticus serotype O3:K6 (strain RIMD 2210633), this protein is Phosphate acyltransferase.